A 1072-amino-acid polypeptide reads, in one-letter code: DNA-directed RNA polymerase subunit beta (1072 aa).

The protein belongs to the RNA polymerase beta chain family. As to quaternary structure, in plastids the minimal PEP RNA polymerase catalytic core is composed of four subunits: alpha, beta, beta', and beta''. When a (nuclear-encoded) sigma factor is associated with the core the holoenzyme is formed, which can initiate transcription.

It localises to the plastid. The protein localises to the chloroplast. The catalysed reaction is RNA(n) + a ribonucleoside 5'-triphosphate = RNA(n+1) + diphosphate. In terms of biological role, DNA-dependent RNA polymerase catalyzes the transcription of DNA into RNA using the four ribonucleoside triphosphates as substrates. The polypeptide is DNA-directed RNA polymerase subunit beta (Oenothera elata subsp. hookeri (Hooker's evening primrose)).